The primary structure comprises 66 residues: Large ribosomal subunit protein uL29 (66 aa).

This sequence belongs to the universal ribosomal protein uL29 family.

This chain is Large ribosomal subunit protein uL29, found in Francisella tularensis subsp. holarctica (strain LVS).